The primary structure comprises 401 residues: CinA-like protein (401 aa).

The protein belongs to the CinA family.

This Thermosipho melanesiensis (strain DSM 12029 / CIP 104789 / BI429) protein is CinA-like protein.